The sequence spans 179 residues: Large ribosomal subunit protein uL6 (179 aa).

It belongs to the universal ribosomal protein uL6 family. Part of the 50S ribosomal subunit.

Functionally, this protein binds to the 23S rRNA, and is important in its secondary structure. It is located near the subunit interface in the base of the L7/L12 stalk, and near the tRNA binding site of the peptidyltransferase center. In Acidobacterium capsulatum (strain ATCC 51196 / DSM 11244 / BCRC 80197 / JCM 7670 / NBRC 15755 / NCIMB 13165 / 161), this protein is Large ribosomal subunit protein uL6.